The sequence spans 481 residues: Glutamate--tRNA ligase (481 aa).

The 'HIGH' region signature appears at 10 to 20 (PSPTGHLHIGN). Residues 251–255 (KLSKR) carry the 'KMSKS' region motif. Residue Lys254 participates in ATP binding.

It belongs to the class-I aminoacyl-tRNA synthetase family. Glutamate--tRNA ligase type 1 subfamily. In terms of assembly, monomer.

It is found in the cytoplasm. It catalyses the reaction tRNA(Glu) + L-glutamate + ATP = L-glutamyl-tRNA(Glu) + AMP + diphosphate. Functionally, catalyzes the attachment of glutamate to tRNA(Glu) in a two-step reaction: glutamate is first activated by ATP to form Glu-AMP and then transferred to the acceptor end of tRNA(Glu). The sequence is that of Glutamate--tRNA ligase from Exiguobacterium sibiricum (strain DSM 17290 / CCUG 55495 / CIP 109462 / JCM 13490 / 255-15).